The primary structure comprises 132 residues: MIVGLGTDIVEIERIEQKVPQAGDHEALAKCRLAKRVLTESEMAIFVASSKPGRYLAKRFAAKEAAAKALGTGIGRGVSFQHIEISNDANGAPQVNFSGGAAERLALLSGVRGHLSIADEKHYATATVILES.

Positions 8 and 64 each coordinate Mg(2+).

Belongs to the P-Pant transferase superfamily. AcpS family. Mg(2+) is required as a cofactor.

It localises to the cytoplasm. The catalysed reaction is apo-[ACP] + CoA = holo-[ACP] + adenosine 3',5'-bisphosphate + H(+). Transfers the 4'-phosphopantetheine moiety from coenzyme A to a Ser of acyl-carrier-protein. This chain is Holo-[acyl-carrier-protein] synthase, found in Shewanella sediminis (strain HAW-EB3).